The following is a 906-amino-acid chain: Protein translocase subunit SecA (906 aa).

ATP is bound by residues Gln87, 105–109, and Asp507; that span reads GEGKT. Positions 890, 892, 901, and 902 each coordinate Zn(2+).

Belongs to the SecA family. As to quaternary structure, monomer and homodimer. Part of the essential Sec protein translocation apparatus which comprises SecA, SecYEG and auxiliary proteins SecDF-YajC and YidC. Zn(2+) is required as a cofactor.

It localises to the cell inner membrane. Its subcellular location is the cytoplasm. It catalyses the reaction ATP + H2O + cellular proteinSide 1 = ADP + phosphate + cellular proteinSide 2.. Its function is as follows. Part of the Sec protein translocase complex. Interacts with the SecYEG preprotein conducting channel. Has a central role in coupling the hydrolysis of ATP to the transfer of proteins into and across the cell membrane, serving both as a receptor for the preprotein-SecB complex and as an ATP-driven molecular motor driving the stepwise translocation of polypeptide chains across the membrane. The chain is Protein translocase subunit SecA from Laribacter hongkongensis (strain HLHK9).